Reading from the N-terminus, the 110-residue chain is Holo-[acyl-carrier-protein] synthase (110 aa).

Mg(2+) contacts are provided by D8 and E54.

This sequence belongs to the P-Pant transferase superfamily. AcpS family. Mg(2+) serves as cofactor.

Its subcellular location is the cytoplasm. The enzyme catalyses apo-[ACP] + CoA = holo-[ACP] + adenosine 3',5'-bisphosphate + H(+). Its function is as follows. Transfers the 4'-phosphopantetheine moiety from coenzyme A to a Ser of acyl-carrier-protein. This is Holo-[acyl-carrier-protein] synthase from Mycoplasma mycoides subsp. mycoides SC (strain CCUG 32753 / NCTC 10114 / PG1).